A 436-amino-acid chain; its full sequence is Homeobox protein PKNOX1 (436 aa).

Positions 23–50 (ELKTEQDPNCSDPDAEGVSPPPIESQTP) are disordered. 2 positions are modified to phosphoserine: Ser33 and Ser41. The region spanning 80-163 (GSEGTTSASF…MNSETLLSGE (84 aa)) is the MEIS N-terminal domain. The homeobox; TALE-type DNA-binding region spans 259-321 (SKNKRGVLPK…NARRRILQPM (63 aa)). Positions 401–436 (AGQSEDESVDSTEDEGGALAPTHISGLVLENSDSLQ) are disordered. Residues 404 to 416 (SEDESVDSTEDEG) show a composition bias toward acidic residues.

Belongs to the TALE/MEIS homeobox family. Interacts with MN1.

The protein resides in the nucleus. Its function is as follows. Activates transcription in the presence of PBX1A and HOXA1. Functionally, (Microbial infection) In complex with PBX1, binds to the 5'-TGATTGAC-3' consensus sequence in the U5 region of Moloney murine leukemia virus and promotes viral transcription. This is Homeobox protein PKNOX1 from Mus musculus (Mouse).